The following is a 625-amino-acid chain: Glucose dehydrogenase [FAD, quinone] (625 aa).

The signal sequence occupies residues 1–42; the sequence is MATSPSSCDCLVGVPTGPTLASTCGGSAFMLFMGLLEVFIRS. Residue 66 to 95 participates in FAD binding; sequence DFIVIGGGSAGSVVASRLSEVPQWKVLLIE. The active-site Proton acceptor is histidine 544. Residue selenocysteine 613 is a non-standard amino acid, selenocysteine.

Belongs to the GMC oxidoreductase family. It depends on FAD as a cofactor.

Its subcellular location is the secreted. It catalyses the reaction a quinone + D-glucose = D-glucono-1,5-lactone + a quinol. This is Glucose dehydrogenase [FAD, quinone] (Gld) from Drosophila pseudoobscura pseudoobscura (Fruit fly).